A 282-amino-acid chain; its full sequence is Phosphoglucan phosphatase LSF2, chloroplastic (282 aa).

Residues 1–61 (MSVIGSKSCI…GENPGTNGVS (61 aa)) constitute a chloroplast transit peptide. Residues Y83, 153 to 156 (RHMR), D161, and 177 to 180 (SLEW) each bind substrate. The region spanning 92–249 (NYTLIRDELI…TYDLAKNDPW (158 aa)) is the Tyrosine-protein phosphatase domain. C193 functions as the Phosphocysteine intermediate in the catalytic mechanism. Positions 193-199 (CSAGLGR) match the Glucan phosphatase signature motif CXAGXGR motif. Substrate-binding positions include 194–199 (SAGLGR), G230, K245, E251, 259–263 (NAFED), and E268.

Widely expressed.

The protein resides in the plastid. Its subcellular location is the chloroplast. Starch-associated phosphoglucan phosphatase that selectively dephosphorylates the glucan C3 position. Probably participates in the regulation of starch degradation. In Arabidopsis thaliana (Mouse-ear cress), this protein is Phosphoglucan phosphatase LSF2, chloroplastic (LSF2).